The sequence spans 99 residues: NADH-quinone oxidoreductase subunit K (99 aa).

The next 3 helical transmembrane spans lie at 3–23 (PANYLILSALLFTIGTVGVLV), 28–48 (IVVFMSVELMLNAVNLTLVTF), and 59–79 (IMAFFVMVVAAAEVVIGLAII).

It belongs to the complex I subunit 4L family. In terms of assembly, NDH-1 is composed of 14 different subunits. Subunits NuoA, H, J, K, L, M, N constitute the membrane sector of the complex.

It localises to the cell membrane. It carries out the reaction a quinone + NADH + 5 H(+)(in) = a quinol + NAD(+) + 4 H(+)(out). Functionally, NDH-1 shuttles electrons from NADH, via FMN and iron-sulfur (Fe-S) centers, to quinones in the respiratory chain. The immediate electron acceptor for the enzyme in this species is believed to be a menaquinone. Couples the redox reaction to proton translocation (for every two electrons transferred, four hydrogen ions are translocated across the cytoplasmic membrane), and thus conserves the redox energy in a proton gradient. This is NADH-quinone oxidoreductase subunit K from Frankia casuarinae (strain DSM 45818 / CECT 9043 / HFP020203 / CcI3).